The primary structure comprises 310 residues: Olfactory receptor 1496 (310 aa).

Over Met-1 to His-23 the chain is Extracellular. Asn-3 carries N-linked (GlcNAc...) asparagine glycosylation. A helical membrane pass occupies residues Leu-24–Gln-48. The Cytoplasmic portion of the chain corresponds to Leu-49 to Thr-55. A helical transmembrane segment spans residues Pro-56–Pro-77. Residues Lys-78–Gln-98 lie on the Extracellular side of the membrane. A disulfide bridge connects residues Cys-95 and Cys-187. The chain crosses the membrane as a helical span at residues Thr-99 to Tyr-118. Residues Asp-119–Lys-137 lie on the Cytoplasmic side of the membrane. A helical membrane pass occupies residues Leu-138 to Met-156. Topologically, residues His-157–Glu-194 are extracellular. The helical transmembrane segment at Leu-195 to Ala-217 threads the bilayer. Over Arg-218–Lys-234 the chain is Cytoplasmic. Residues Val-235–Leu-258 form a helical membrane-spanning segment. The Extracellular portion of the chain corresponds to Cys-259–Met-270. A helical transmembrane segment spans residues Val-271–Leu-290. Residues Arg-291 to Leu-310 lie on the Cytoplasmic side of the membrane.

The protein belongs to the G-protein coupled receptor 1 family. As to expression, olfactory epithelium.

The protein localises to the cell membrane. Odorant receptor. The chain is Olfactory receptor 1496 (Olr1496) from Rattus norvegicus (Rat).